A 527-amino-acid polypeptide reads, in one-letter code: Phosphoenolpyruvate carboxykinase (ATP) (527 aa).

3 residues coordinate substrate: Arg56, Tyr192, and Lys198. ATP is bound by residues Lys198, His217, and 233 to 241; that span reads GLSGTGKTT. Mn(2+) is bound by residues Lys198 and His217. Asp254 lines the Mn(2+) pocket. Positions 282, 319, and 444 each coordinate ATP. Arg319 serves as a coordination point for substrate.

This sequence belongs to the phosphoenolpyruvate carboxykinase (ATP) family. Mn(2+) serves as cofactor.

The protein resides in the cytoplasm. It carries out the reaction oxaloacetate + ATP = phosphoenolpyruvate + ADP + CO2. The protein operates within carbohydrate biosynthesis; gluconeogenesis. Involved in the gluconeogenesis. Catalyzes the conversion of oxaloacetate (OAA) to phosphoenolpyruvate (PEP) through direct phosphoryl transfer between the nucleoside triphosphate and OAA. The protein is Phosphoenolpyruvate carboxykinase (ATP) of Bacillus velezensis (strain DSM 23117 / BGSC 10A6 / LMG 26770 / FZB42) (Bacillus amyloliquefaciens subsp. plantarum).